The sequence spans 253 residues: 4-hydroxy-tetrahydrodipicolinate reductase (253 aa).

Glycine 16–methionine 21 serves as a coordination point for NAD(+). Residue arginine 44 coordinates NADP(+). NAD(+)-binding positions include glycine 85 to threonine 87 and cysteine 111 to threonine 114. Catalysis depends on histidine 144, which acts as the Proton donor/acceptor. Residue histidine 145 coordinates (S)-2,3,4,5-tetrahydrodipicolinate. The Proton donor role is filled by lysine 148. Glycine 154 to threonine 155 lines the (S)-2,3,4,5-tetrahydrodipicolinate pocket.

It belongs to the DapB family.

It is found in the cytoplasm. The catalysed reaction is (S)-2,3,4,5-tetrahydrodipicolinate + NAD(+) + H2O = (2S,4S)-4-hydroxy-2,3,4,5-tetrahydrodipicolinate + NADH + H(+). The enzyme catalyses (S)-2,3,4,5-tetrahydrodipicolinate + NADP(+) + H2O = (2S,4S)-4-hydroxy-2,3,4,5-tetrahydrodipicolinate + NADPH + H(+). The protein operates within amino-acid biosynthesis; L-lysine biosynthesis via DAP pathway; (S)-tetrahydrodipicolinate from L-aspartate: step 4/4. In terms of biological role, catalyzes the conversion of 4-hydroxy-tetrahydrodipicolinate (HTPA) to tetrahydrodipicolinate. This Chlamydia trachomatis serovar A (strain ATCC VR-571B / DSM 19440 / HAR-13) protein is 4-hydroxy-tetrahydrodipicolinate reductase.